The sequence spans 563 residues: NAD-dependent malic enzyme (563 aa).

Tyr101 serves as the catalytic Proton donor. NAD(+) is bound at residue Arg154. Catalysis depends on Lys172, which acts as the Proton acceptor. Glu243, Asp244, and Asp267 together coordinate a divalent metal cation. 2 residues coordinate NAD(+): Asp267 and Asn416.

The protein belongs to the malic enzymes family. As to quaternary structure, homotetramer. Mg(2+) is required as a cofactor. The cofactor is Mn(2+).

It catalyses the reaction (S)-malate + NAD(+) = pyruvate + CO2 + NADH. The catalysed reaction is oxaloacetate + H(+) = pyruvate + CO2. In Pseudomonas savastanoi pv. phaseolicola (strain 1448A / Race 6) (Pseudomonas syringae pv. phaseolicola (strain 1448A / Race 6)), this protein is NAD-dependent malic enzyme.